The chain runs to 202 residues: Small ribosomal subunit protein uS4 (202 aa).

The S4 RNA-binding domain maps to 94–157; sequence SRLDSLVYRA…LEIPLIKNTL (64 aa).

It belongs to the universal ribosomal protein uS4 family. As to quaternary structure, part of the 30S ribosomal subunit. Contacts protein S5. The interaction surface between S4 and S5 is involved in control of translational fidelity.

One of the primary rRNA binding proteins, it binds directly to 16S rRNA where it nucleates assembly of the body of the 30S subunit. Functionally, with S5 and S12 plays an important role in translational accuracy. This is Small ribosomal subunit protein uS4 from Ureaplasma parvum serovar 3 (strain ATCC 27815 / 27 / NCTC 11736).